A 145-amino-acid polypeptide reads, in one-letter code: D-aminoacyl-tRNA deacylase (145 aa).

The Gly-cisPro motif, important for rejection of L-amino acids motif lies at 137 to 138 (GP).

Belongs to the DTD family. In terms of assembly, homodimer.

The protein resides in the cytoplasm. It catalyses the reaction glycyl-tRNA(Ala) + H2O = tRNA(Ala) + glycine + H(+). It carries out the reaction a D-aminoacyl-tRNA + H2O = a tRNA + a D-alpha-amino acid + H(+). Functionally, an aminoacyl-tRNA editing enzyme that deacylates mischarged D-aminoacyl-tRNAs. Also deacylates mischarged glycyl-tRNA(Ala), protecting cells against glycine mischarging by AlaRS. Acts via tRNA-based rather than protein-based catalysis; rejects L-amino acids rather than detecting D-amino acids in the active site. By recycling D-aminoacyl-tRNA to D-amino acids and free tRNA molecules, this enzyme counteracts the toxicity associated with the formation of D-aminoacyl-tRNA entities in vivo and helps enforce protein L-homochirality. The protein is D-aminoacyl-tRNA deacylase of Shewanella baltica (strain OS155 / ATCC BAA-1091).